The sequence spans 359 residues: Ribosomal RNA small subunit methyltransferase H (359 aa).

S-adenosyl-L-methionine-binding positions include Ala-39–His-41, Asp-58, Phe-87, Asp-108, and Gln-115. The segment at Ile-339 to Gly-359 is disordered. Basic residues predominate over residues Asn-350 to Gly-359.

Belongs to the methyltransferase superfamily. RsmH family.

Its subcellular location is the cytoplasm. The catalysed reaction is cytidine(1402) in 16S rRNA + S-adenosyl-L-methionine = N(4)-methylcytidine(1402) in 16S rRNA + S-adenosyl-L-homocysteine + H(+). Its function is as follows. Specifically methylates the N4 position of cytidine in position 1402 (C1402) of 16S rRNA. The polypeptide is Ribosomal RNA small subunit methyltransferase H (Bifidobacterium longum subsp. infantis (strain ATCC 15697 / DSM 20088 / JCM 1222 / NCTC 11817 / S12)).